The following is an 835-amino-acid chain: Translation initiation factor IF-2 (835 aa).

The segment at 1–240 (MSDSDGKKTL…RKQERARQKA (240 aa)) is disordered. The segment covering 50-59 (AGKGGAGGVA) has biased composition (gly residues). The segment covering 86 to 152 (KAREAEEAAQ…AEAAKKRAAA (67 aa)) has biased composition (basic and acidic residues). The segment covering 153–169 (DKAAAAAPKSDAGVAPA) has biased composition (low complexity). The span at 184–205 (RKAEREREERGRGAKGRNDGGR) shows a compositional bias: basic and acidic residues. In terms of domain architecture, tr-type G spans 332 to 500 (PRPPVITIMG…AIALQAEILE (169 aa)). A G1 region spans residues 341-348 (GHVDHGKT). Residue 341-348 (GHVDHGKT) coordinates GTP. The tract at residues 366–370 (GITQH) is G2. The G3 stretch occupies residues 388–391 (DTPG). Residues 388–392 (DTPGH) and 442–445 (NKID) contribute to the GTP site. Residues 442–445 (NKID) are G4. Residues 478–480 (SAH) form a G5 region.

It belongs to the TRAFAC class translation factor GTPase superfamily. Classic translation factor GTPase family. IF-2 subfamily.

It localises to the cytoplasm. In terms of biological role, one of the essential components for the initiation of protein synthesis. Protects formylmethionyl-tRNA from spontaneous hydrolysis and promotes its binding to the 30S ribosomal subunits. Also involved in the hydrolysis of GTP during the formation of the 70S ribosomal complex. This Ruegeria sp. (strain TM1040) (Silicibacter sp.) protein is Translation initiation factor IF-2.